We begin with the raw amino-acid sequence, 299 residues long: ATP phosphoribosyltransferase (299 aa).

This sequence belongs to the ATP phosphoribosyltransferase family. Long subfamily. As to quaternary structure, equilibrium between an active dimeric form, an inactive hexameric form and higher aggregates. Interconversion between the various forms is largely reversible and is influenced by the natural substrates and inhibitors of the enzyme. The cofactor is Mg(2+).

The protein resides in the cytoplasm. It carries out the reaction 1-(5-phospho-beta-D-ribosyl)-ATP + diphosphate = 5-phospho-alpha-D-ribose 1-diphosphate + ATP. Its pathway is amino-acid biosynthesis; L-histidine biosynthesis; L-histidine from 5-phospho-alpha-D-ribose 1-diphosphate: step 1/9. Its activity is regulated as follows. Feedback inhibited by histidine. In terms of biological role, catalyzes the condensation of ATP and 5-phosphoribose 1-diphosphate to form N'-(5'-phosphoribosyl)-ATP (PR-ATP). Has a crucial role in the pathway because the rate of histidine biosynthesis seems to be controlled primarily by regulation of HisG enzymatic activity. This Shigella flexneri serotype 5b (strain 8401) protein is ATP phosphoribosyltransferase.